The primary structure comprises 1525 residues: Dicer-like protein 1 (1525 aa).

The span at 37 to 52 shows a compositional bias: acidic residues; it reads DLQEDDGSSDESDNDE. A disordered region spans residues 37–65; sequence DLQEDDGSSDESDNDEREDHSKTGVSQQR. The region spanning 124 to 305 is the Helicase ATP-binding domain; sequence LFERAKVQNT…DEATRLEKLL (182 aa). 137–144 contributes to the ATP binding site; it reads LDTGSGKT. The short motif at 250-253 is the DEAH box element; sequence DEAH. One can recognise a Helicase C-terminal domain in the interval 439 to 605; the sequence is QLSPKVQVLR…SFCRTLPEDR (167 aa). Positions 641 to 731 constitute a Dicer dsRNA-binding fold domain; it reads ATAILARYAS…NSIYHRRLPA (91 aa). The 129-residue stretch at 881 to 1009 folds into the PAZ domain; it reads ESLTYVRDND…ICIEPLKVSA (129 aa). 2 consecutive RNase III domains span residues 1032–1192 and 1243–1394; these read LISL…LSGG and SRKI…VDSD. Positions 1283, 1380, and 1383 each coordinate Mg(2+). Positions 1428–1496 constitute a DRBM domain; that stretch reads TFLHNRLTNE…SEKALAVLDE (69 aa). Zn(2+) is bound by residues Cys-1440, His-1467, Cys-1508, and Cys-1510.

This sequence belongs to the helicase family. Dicer subfamily. Requires Mg(2+) as cofactor. Mn(2+) serves as cofactor.

Functionally, dicer-like endonuclease involved in cleaving double-stranded RNA in the RNA interference (RNAi) pathway. Produces 21 to 25 bp dsRNAs (siRNAs) which target the selective destruction of homologous RNAs leading to sequence-specific suppression of gene expression, called post-transcriptional gene silencing (PTGS). Part of a broad host defense response against viral infection and transposons. The protein is Dicer-like protein 1 (dcl1) of Aspergillus niger (strain ATCC MYA-4892 / CBS 513.88 / FGSC A1513).